We begin with the raw amino-acid sequence, 193 residues long: NADH-quinone oxidoreductase subunit B (193 aa).

4 residues coordinate [4Fe-4S] cluster: Cys-49, Cys-50, Cys-115, and Cys-144. The tract at residues 172 to 193 (FKKEEPREANAPVPVNTEMPLE) is disordered.

The protein belongs to the complex I 20 kDa subunit family. As to quaternary structure, NDH-1 is composed of 14 different subunits. Subunits NuoB, C, D, E, F, and G constitute the peripheral sector of the complex. It depends on [4Fe-4S] cluster as a cofactor.

Its subcellular location is the cell inner membrane. It carries out the reaction a quinone + NADH + 5 H(+)(in) = a quinol + NAD(+) + 4 H(+)(out). Its function is as follows. NDH-1 shuttles electrons from NADH, via FMN and iron-sulfur (Fe-S) centers, to quinones in the respiratory chain. The immediate electron acceptor for the enzyme in this species is believed to be ubiquinone. Couples the redox reaction to proton translocation (for every two electrons transferred, four hydrogen ions are translocated across the cytoplasmic membrane), and thus conserves the redox energy in a proton gradient. The sequence is that of NADH-quinone oxidoreductase subunit B from Akkermansia muciniphila (strain ATCC BAA-835 / DSM 22959 / JCM 33894 / BCRC 81048 / CCUG 64013 / CIP 107961 / Muc).